The primary structure comprises 252 residues: Chitooligosaccharide deacetylase (252 aa).

His-61 and His-125 together coordinate Mg(2+).

Belongs to the YdjC deacetylase family. ChbG subfamily. Homodimer. Mg(2+) serves as cofactor.

The protein localises to the cytoplasm. It catalyses the reaction N,N'-diacetylchitobiose + H2O = N-acetyl-beta-D-glucosaminyl-(1-&gt;4)-D-glucosamine + acetate. It carries out the reaction diacetylchitobiose-6'-phosphate + H2O = N'-monoacetylchitobiose-6'-phosphate + acetate. It functions in the pathway glycan degradation; chitin degradation. In terms of biological role, involved in the degradation of chitin. ChbG is essential for growth on the acetylated chitooligosaccharides chitobiose and chitotriose but is dispensable for growth on cellobiose and chitosan dimer, the deacetylated form of chitobiose. Deacetylation of chitobiose-6-P and chitotriose-6-P is necessary for both the activation of the chb promoter by the regulatory protein ChbR and the hydrolysis of phosphorylated beta-glucosides by the phospho-beta-glucosidase ChbF. Catalyzes the removal of only one acetyl group from chitobiose-6-P to yield monoacetylchitobiose-6-P, the inducer of ChbR and the substrate of ChbF. The chain is Chitooligosaccharide deacetylase from Escherichia coli O8 (strain IAI1).